The following is a 494-amino-acid chain: MEKWWFNSMLSNEELEHRCGLSKSMNSLGRAIGNTSGSEDLIINDTDKNIHSWSDSGSYSCNNVDDLFGIRDIWSFVSDDTFLVRDSNGDSYSVYFDIENQIFQIDNDSSFLSELESSFSNYLNFSYLNSGSKSDNRYYDRYMYDIKYSWNNHINSCIDSYLHSEISIESYISSSSDNYGDSYISSFICNESVSVSDNGSSSIRTSGNGSDFNIRGRSNDFDINQKYRHLWVQCENCYGLNYKKFFRSKMNICEQCGYHLKMSSSDRIELSIDPGTWDPMDEDMVSIDPIEFHSEEEPYRDRIDSYQRKTGLTEAVQTGIGQLNGIPIAIGVMDFQFMGGSMGSVVGEKITRLIEYATNGSLPIIMVCASGGARMQEGSLSLMQMAKISSASYNYQSNKKLFYVSILTSPTTGGVTASFGMLGDIIIAEPNAYIAFAGKRVIEQTLNKTVPDGSQAAEYSFHKGLFDSIVPRNPLKGVLSELFQLHGFFPLNQN.

Residues 230–494 (LWVQCENCYG…LHGFFPLNQN (265 aa)) form the CoA carboxyltransferase N-terminal domain. The Zn(2+) site is built by Cys-234, Cys-237, Cys-253, and Cys-256. The C4-type zinc finger occupies 234 to 256 (CENCYGLNYKKFFRSKMNICEQC).

The protein belongs to the AccD/PCCB family. In terms of assembly, acetyl-CoA carboxylase is a heterohexamer composed of biotin carboxyl carrier protein, biotin carboxylase and 2 subunits each of ACCase subunit alpha and ACCase plastid-coded subunit beta (accD). Zn(2+) serves as cofactor.

The protein localises to the plastid. The protein resides in the chloroplast stroma. It catalyses the reaction N(6)-carboxybiotinyl-L-lysyl-[protein] + acetyl-CoA = N(6)-biotinyl-L-lysyl-[protein] + malonyl-CoA. The protein operates within lipid metabolism; malonyl-CoA biosynthesis; malonyl-CoA from acetyl-CoA: step 1/1. Component of the acetyl coenzyme A carboxylase (ACC) complex. Biotin carboxylase (BC) catalyzes the carboxylation of biotin on its carrier protein (BCCP) and then the CO(2) group is transferred by the transcarboxylase to acetyl-CoA to form malonyl-CoA. The sequence is that of Acetyl-coenzyme A carboxylase carboxyl transferase subunit beta, chloroplastic from Drimys granadensis.